A 261-amino-acid polypeptide reads, in one-letter code: Pyrroline-5-carboxylate reductase (261 aa).

The protein belongs to the pyrroline-5-carboxylate reductase family.

The protein localises to the cytoplasm. The catalysed reaction is L-proline + NADP(+) = (S)-1-pyrroline-5-carboxylate + NADPH + 2 H(+). The enzyme catalyses L-proline + NAD(+) = (S)-1-pyrroline-5-carboxylate + NADH + 2 H(+). Its pathway is amino-acid biosynthesis; L-proline biosynthesis; L-proline from L-glutamate 5-semialdehyde: step 1/1. In terms of biological role, catalyzes the reduction of 1-pyrroline-5-carboxylate (PCA) to L-proline. This is Pyrroline-5-carboxylate reductase from Thermus thermophilus (strain ATCC BAA-163 / DSM 7039 / HB27).